Consider the following 165-residue polypeptide: Short form salivary protein D7R1 (165 aa).

The first 21 residues, 1 to 21, serve as a signal peptide directing secretion; that stretch reads MFNKLHLVSLLACGLFVIAQA. 3 cysteine pairs are disulfide-bonded: cysteine 27/cysteine 59, cysteine 40/cysteine 164, and cysteine 98/cysteine 117. Residues glutamate 28, histidine 56, tyrosine 115, aspartate 132, and glutamate 135 each coordinate serotonin. Histamine contacts are provided by tyrosine 115, aspartate 132, and glutamate 135.

Belongs to the PBP/GOBP family. As to expression, female salivary gland. Not detected in female carcass without salivary glands. Not detected in male tissues.

It localises to the secreted. Modulates blood feeding of female mosquitoes on vertebrate species by binding and sequestering different mediators involved in the host response. Binds serotonin and histamine. Increases blood clotting time. The chain is Short form salivary protein D7R1 from Anopheles gambiae (African malaria mosquito).